Consider the following 282-residue polypeptide: GDT1-like protein 4 (282 aa).

A signal peptide spans Met1 to Ala26. 6 helical membrane passes run Ala67–Ile87, Thr106–Gly126, Thr138–Trp158, Ile189–Glu209, Ala227–Val247, and Gly259–Tyr279.

This sequence belongs to the GDT1 family.

It is found in the membrane. This is GDT1-like protein 4 from Oryza sativa subsp. japonica (Rice).